A 416-amino-acid polypeptide reads, in one-letter code: Serine hydroxymethyltransferase 1 (416 aa).

(6S)-5,6,7,8-tetrahydrofolate contacts are provided by residues Leu-121 and Gly-125–Leu-127. Lys-229 is subject to N6-(pyridoxal phosphate)lysine. Residues Glu-245 and Ser-354–Phe-356 contribute to the (6S)-5,6,7,8-tetrahydrofolate site.

This sequence belongs to the SHMT family. Homodimer. The cofactor is pyridoxal 5'-phosphate.

Its subcellular location is the cytoplasm. It catalyses the reaction (6R)-5,10-methylene-5,6,7,8-tetrahydrofolate + glycine + H2O = (6S)-5,6,7,8-tetrahydrofolate + L-serine. It participates in one-carbon metabolism; tetrahydrofolate interconversion. It functions in the pathway amino-acid biosynthesis; glycine biosynthesis; glycine from L-serine: step 1/1. Catalyzes the reversible interconversion of serine and glycine with tetrahydrofolate (THF) serving as the one-carbon carrier. This reaction serves as the major source of one-carbon groups required for the biosynthesis of purines, thymidylate, methionine, and other important biomolecules. Also exhibits THF-independent aldolase activity toward beta-hydroxyamino acids, producing glycine and aldehydes, via a retro-aldol mechanism. The polypeptide is Serine hydroxymethyltransferase 1 (Vibrio parahaemolyticus serotype O3:K6 (strain RIMD 2210633)).